Consider the following 306-residue polypeptide: tRNA dimethylallyltransferase (306 aa).

Residue 12–19 (GPTASGKT) participates in ATP binding. 14 to 19 (TASGKT) contributes to the substrate binding site. Interaction with substrate tRNA regions lie at residues 37-40 (DSAL), 161-165 (QRLSR), and 242-247 (RCVGYR).

Belongs to the IPP transferase family. As to quaternary structure, monomer. Mg(2+) serves as cofactor.

The catalysed reaction is adenosine(37) in tRNA + dimethylallyl diphosphate = N(6)-dimethylallyladenosine(37) in tRNA + diphosphate. Its function is as follows. Catalyzes the transfer of a dimethylallyl group onto the adenine at position 37 in tRNAs that read codons beginning with uridine, leading to the formation of N6-(dimethylallyl)adenosine (i(6)A). The sequence is that of tRNA dimethylallyltransferase from Shewanella amazonensis (strain ATCC BAA-1098 / SB2B).